A 287-amino-acid chain; its full sequence is ATP synthase gamma chain (287 aa).

This sequence belongs to the ATPase gamma chain family. In terms of assembly, F-type ATPases have 2 components, CF(1) - the catalytic core - and CF(0) - the membrane proton channel. CF(1) has five subunits: alpha(3), beta(3), gamma(1), delta(1), epsilon(1). CF(0) has three main subunits: a, b and c.

It is found in the cell inner membrane. In terms of biological role, produces ATP from ADP in the presence of a proton gradient across the membrane. The gamma chain is believed to be important in regulating ATPase activity and the flow of protons through the CF(0) complex. The protein is ATP synthase gamma chain of Hahella chejuensis (strain KCTC 2396).